We begin with the raw amino-acid sequence, 46 residues long: Apamin (46 aa).

The N-terminal stretch at 1-27 is a signal peptide; the sequence is MISMLRCISLFLSVILITGYFVTPVMS. 2 disulfides stabilise this stretch: Cys-28–Cys-38 and Cys-30–Cys-42. The essential for toxin activity stretch occupies residues 40 to 41; sequence RR. His-45 is modified (histidine amide).

Expressed by the venom gland.

The protein resides in the secreted. Its function is as follows. Neurotoxin that blocks voltage-independent calcium-activated potassium channels (KCNN1=SK1, KCNN2=SK2, KCNN3=SK3). This is Apamin from Apis cerana cerana (Oriental honeybee).